The primary structure comprises 303 residues: Quinolinate synthase (303 aa).

Positions 24 and 41 each coordinate iminosuccinate. Cys-86 contributes to the [4Fe-4S] cluster binding site. Iminosuccinate is bound by residues 112–114 (YIN) and Ser-129. Cys-172 serves as a coordination point for [4Fe-4S] cluster. Iminosuccinate contacts are provided by residues 198 to 200 (HPE) and Thr-215. Cys-260 serves as a coordination point for [4Fe-4S] cluster.

It belongs to the quinolinate synthase family. Type 2 subfamily. It depends on [4Fe-4S] cluster as a cofactor.

It localises to the cytoplasm. It carries out the reaction iminosuccinate + dihydroxyacetone phosphate = quinolinate + phosphate + 2 H2O + H(+). The protein operates within cofactor biosynthesis; NAD(+) biosynthesis; quinolinate from iminoaspartate: step 1/1. Catalyzes the condensation of iminoaspartate with dihydroxyacetone phosphate to form quinolinate. The chain is Quinolinate synthase from Caldicellulosiruptor bescii (strain ATCC BAA-1888 / DSM 6725 / KCTC 15123 / Z-1320) (Anaerocellum thermophilum).